The following is a 449-amino-acid chain: mRNA-capping enzyme subunit alpha (449 aa).

Lys-66 functions as the N6-GMP-lysine intermediate in the catalytic mechanism. The disordered stretch occupies residues 405–449 (DERKNGAYQHHSSSFSESRQQPKAEPVAEKKQTEPKYVDDDDWSD). The segment covering 414-423 (HHSSSFSESR) has biased composition (polar residues). Basic and acidic residues predominate over residues 424–442 (QQPKAEPVAEKKQTEPKYV).

It belongs to the eukaryotic GTase family. In terms of assembly, heterodimer. The mRNA-capping enzyme is composed of two separate chains alpha and beta, respectively a mRNA guanylyltransferase and an mRNA 5'-triphosphate monophosphatase.

The protein localises to the nucleus. The enzyme catalyses a 5'-end diphospho-ribonucleoside in mRNA + GTP + H(+) = a 5'-end (5'-triphosphoguanosine)-ribonucleoside in mRNA + diphosphate. Functionally, second step of mRNA capping. Transfer of the GMP moiety of GTP to the 5'-end of RNA via an enzyme-GMP covalent reaction intermediate. This chain is mRNA-capping enzyme subunit alpha (CEG1), found in Candida glabrata (strain ATCC 2001 / BCRC 20586 / JCM 3761 / NBRC 0622 / NRRL Y-65 / CBS 138) (Yeast).